A 325-amino-acid polypeptide reads, in one-letter code: Dehydrogenase/reductase SDR family member 7B (325 aa).

Residues 1–17 (MISPSSRKGMLKERAMD) are Cytoplasmic-facing. The chain crosses the membrane as a helical; Signal-anchor for type II membrane protein span at residues 18–38 (LVTQTTILPLLFGCLGIFSLF). The Lumenal portion of the chain corresponds to 39 to 325 (RLLQRTRSKA…ARKERKSKNS (287 aa)). Positions 62 and 64 each coordinate NAD(+). A substrate-binding site is contributed by Ser194. Residues Tyr207, Lys211, and Thr242 each coordinate NAD(+). Catalysis depends on Tyr207, which acts as the Proton acceptor.

The protein belongs to the short-chain dehydrogenases/reductases (SDR) family.

The protein resides in the endoplasmic reticulum membrane. Its function is as follows. Putative oxidoreductase. The sequence is that of Dehydrogenase/reductase SDR family member 7B (Dhrs7b) from Rattus norvegicus (Rat).